The chain runs to 277 residues: 4-diphosphocytidyl-2-C-methyl-D-erythritol kinase (277 aa).

The active site involves Lys9. Residue Pro91–Ser101 participates in ATP binding. Asp133 is a catalytic residue.

Belongs to the GHMP kinase family. IspE subfamily.

It carries out the reaction 4-CDP-2-C-methyl-D-erythritol + ATP = 4-CDP-2-C-methyl-D-erythritol 2-phosphate + ADP + H(+). It participates in isoprenoid biosynthesis; isopentenyl diphosphate biosynthesis via DXP pathway; isopentenyl diphosphate from 1-deoxy-D-xylulose 5-phosphate: step 3/6. Functionally, catalyzes the phosphorylation of the position 2 hydroxy group of 4-diphosphocytidyl-2C-methyl-D-erythritol. In Acinetobacter baumannii (strain AB307-0294), this protein is 4-diphosphocytidyl-2-C-methyl-D-erythritol kinase.